A 208-amino-acid chain; its full sequence is Ribosomal RNA small subunit methyltransferase G (208 aa).

Residues glycine 78, phenylalanine 83, glutamate 101–serine 103, isoleucine 129–glutamate 130, and arginine 142 contribute to the S-adenosyl-L-methionine site.

It belongs to the methyltransferase superfamily. RNA methyltransferase RsmG family.

The protein localises to the cytoplasm. Its function is as follows. Specifically methylates the N7 position of a guanine in 16S rRNA. The chain is Ribosomal RNA small subunit methyltransferase G from Borreliella burgdorferi (strain ZS7) (Borrelia burgdorferi).